Reading from the N-terminus, the 256-residue chain is Calsenilin (256 aa).

Residues 1–22 (MQRTKEAMKASDGSLLGDPGRI) are disordered. Ser14 is modified (phosphoserine). Lys26 is covalently cross-linked (Glycyl lysine isopeptide (Lys-Gly) (interchain with G-Cter in SUMO1)). 2 S-palmitoyl cysteine lipidation sites follow: Cys45 and Cys46. Residues Ser60 and Ser63 each carry the phosphoserine modification. An EF-hand 1; degenerate domain is found at 67-123 (LELSTVRHQPEGLDQLQAQTKFTKKELQSLYRGFKNECPTGLVDEDTFKLIYSQFFP). Residue Lys90 forms a Glycyl lysine isopeptide (Lys-Gly) (interchain with G-Cter in SUMO1) linkage. EF-hand domains lie at 126-161 (DATT…LLRG), 162-197 (TVHE…IYDM), and 210-245 (APLE…DENI). Ca(2+)-binding residues include Asp175, Asn177, Asp179, Tyr181, Glu186, Asp223, Asn225, Asp227, and Glu234. The segment at 243–256 (ENIMSSMQLFENVI) is interaction with KCND2.

This sequence belongs to the recoverin family. In terms of assembly, binds to DNA as a homomultimer. Dimerization is induced by binding to calcium. Interacts with the C-terminus of PSEN1 and PSEN2 and with PSEN2 CTF subunit. Associates with KCN1. Component of heteromultimeric potassium channels. Identified in potassium channel complexes containing KCND1, KCND2, KCND3, KCNIP1, KCNIP2, KCNIP3, KCNIP4, DPP6 and DPP10. Interacts with KCND2 and KCND3. Palmitoylated. Palmitoylation enhances association with the plasma membrane. In terms of processing, proteolytically cleaved by caspase-3. As to expression, detected in brain cortex, thalamus, dentate gyrus and cerebellum (at protein level). Expressed in brain. Colocalizes with KCND2 in excitatory neurons including cortical and hippocampal CA1 pyramidal cells.

It is found in the cytoplasm. The protein resides in the cell membrane. The protein localises to the endoplasmic reticulum. It localises to the golgi apparatus. Its subcellular location is the nucleus. Functionally, calcium-dependent transcriptional repressor that binds to the DRE element of genes including PDYN and FOS. Affinity for DNA is reduced upon binding to calcium and enhanced by binding to magnesium. Seems to be involved in nociception. Regulatory subunit of Kv4/D (Shal)-type voltage-gated rapidly inactivating A-type potassium channels, such as KCND2/Kv4.2 and KCND3/Kv4.3. Modulates channel expression at the cell membrane, gating characteristics, inactivation kinetics and rate of recovery from inactivation in a calcium-dependent and isoform-specific manner. In terms of biological role, may play a role in the regulation of PSEN2 proteolytic processing and apoptosis. Together with PSEN2 involved in modulation of amyloid-beta formation. This is Calsenilin (Kcnip3) from Rattus norvegicus (Rat).